Here is a 421-residue protein sequence, read N- to C-terminus: Inner membrane protein YihN (421 aa).

The Periplasmic portion of the chain corresponds to 1 to 44 (MLTKKKWALFSLLTLCGGTIYKLPSLKDAFYIPMQEYFHLTNGQ). A helical transmembrane segment spans residues 45–65 (IGNAMSVNSFVTTVGFFLSIY). Residues 66–73 (FADKLPRR) are Cytoplasmic-facing. Residues 74 to 91 (YTMSFSLIATGLLGVYLT) form a helical membrane-spanning segment. The Periplasmic portion of the chain corresponds to 92-95 (TMPG). Residues 96-118 (YWGILFVWALFGVTCDMMNWPVL) form a helical membrane-spanning segment. Topologically, residues 119 to 146 (LKSVSRLGNSEQQGRLFGFFETGRGIVD) are cytoplasmic. Residues 147-167 (TVVAFSALAVFTWFGSGLLGF) traverse the membrane as a helical segment. Residue Lys-168 is a topological domain, periplasmic. A helical transmembrane segment spans residues 169 to 189 (AGIWFYSLIVIAVGIIIFFVL). The Cytoplasmic portion of the chain corresponds to 190-220 (NDKEEAPSVEVKKEDGASKNTSMTSVLKDKT). Transmembrane regions (helical) follow at residues 221-241 (IWLI…LTFF) and 242-262 (IPFL…YGII). The Cytoplasmic segment spans residues 263-288 (NQYCLKMIGGPIGGMISDKILKSPSK). The next 2 helical transmembrane spans lie at 289 to 309 (YLCY…MLPH) and 310 to 330 (ESMP…IVFT). Residues 331-354 (QRAVFFAPIGEAKIAENKTGAAMA) are Cytoplasmic-facing. The chain crosses the membrane as a helical span at residues 355 to 375 (LGSFIGYAPAMFCFSLYGYIL). Residues 376–385 (DLNPGIIGYK) are Periplasmic-facing. A helical membrane pass occupies residues 386–406 (IVFGIMACFAFSGAVVSVMLV). Topologically, residues 407–421 (KRISQRKKEMLAAEA) are cytoplasmic.

It belongs to the major facilitator superfamily.

The protein resides in the cell inner membrane. The sequence is that of Inner membrane protein YihN (yihN) from Escherichia coli (strain K12).